The primary structure comprises 584 residues: Glycosyltransferase family 92 protein Os08g0121900 (584 aa).

A compositionally biased stretch (basic and acidic residues) spans 1–10 (MALAAKERKL). Positions 1–33 (MALAAKERKLSRLGSKGSGGGGGGGSFGARGQR) are disordered. Residues 16–28 (KGSGGGGGGGSFG) are compositionally biased toward gly residues. The chain crosses the membrane as a helical span at residues 43–63 (FAAFFAFLFAGAVLFGAAHVI). Residues 314–525 (HSMCVCTMLR…DKFSGRVATY (212 aa)) enclose the GT92 domain.

Belongs to the glycosyltransferase 92 family.

The protein localises to the membrane. The protein is Glycosyltransferase family 92 protein Os08g0121900 of Oryza sativa subsp. japonica (Rice).